Here is a 487-residue protein sequence, read N- to C-terminus: Putative sugar kinase YoaC (487 aa).

It belongs to the FGGY kinase family.

In Bacillus subtilis (strain 168), this protein is Putative sugar kinase YoaC (yoaC).